A 59-amino-acid polypeptide reads, in one-letter code: UPF0434 protein Sputw3181_2540 (59 aa).

Belongs to the UPF0434 family.

The protein is UPF0434 protein Sputw3181_2540 of Shewanella sp. (strain W3-18-1).